A 757-amino-acid polypeptide reads, in one-letter code: MTIFNHTLGFPRIGLNRELKKAQEDYWSGNLLYEDFLCVGSQLRRENWKKQKDAGIDYIPVGDFAWYDHVLSTSMMLGNIPERHLNVNDNKIDLDCLFRIARGCSPDVAASEMTKWFNTNYHYIVPEFNKNRILKFSWKQILEETDEALLLGYKVKPIILGPITYLWLGKIKGEYFDRLDLLKNILPIYKQVLRELSQRNIDFVQIDEPALVLDLPEKWKKAYSYAYEYLNGTTKILLTTYFDSIEHNIEYIRDLPIYGIHIDLVFGKYNLFDFNSKLPKEWILSLGVINGRNVWRADLIKLFKSISTILKFRKKLLIGSSCSLLHSPIDLQKEKNLDKESKKWFSFAVQKCTELSLLSKALNKNDTDSIQKWCSSIYERNFSKRVQKIEVQNRLSEILNVNFKRSDSYNIRSREQKKKFNLPILPTTTIGSFPQTLQIRKLRRDYKQGLINDVDYEIGIKKHIKEVIKEQEKLGIDVLVHGEPERNDMVEYFGENLDGFIFTDNGWVQSYGSRCVKPPIIIGDVSRLKPITVKWSKYAQSLTDKPVKAMLTGPVTILFWSFPREDISLEKIAKQIGLALRDEVLDLEKEKIEIIQIDEPALREGLPLRKSLWNEYLSWAVDAFRLSSSGVKNTTQIHTHMCYCEFHDIMHAISFLDADVITIETARSDMELLKSFKTFKYPNEIGPGVYDIHSSNIPSITSIKFLLNKAIAYIPVERIWVNPDCGLKTRNWNETILALKNMVCAAKEMRDKIKKIT.

Residues Arg17–Lys20 and Lys115 each bind 5-methyltetrahydropteroyltri-L-glutamate. Residues Ile430–Ser432 and Glu483 contribute to the L-homocysteine site. L-methionine is bound by residues Ile430–Ser432 and Glu483. Residues Arg514–Cys515 and Trp560 contribute to the 5-methyltetrahydropteroyltri-L-glutamate site. Asp598 contributes to the L-homocysteine binding site. Position 598 (Asp598) interacts with L-methionine. Glu604 provides a ligand contact to 5-methyltetrahydropteroyltri-L-glutamate. Positions 640, 642, and 664 each coordinate Zn(2+). His693 functions as the Proton donor in the catalytic mechanism. Residue Cys725 participates in Zn(2+) binding.

Belongs to the vitamin-B12 independent methionine synthase family. The cofactor is Zn(2+).

The catalysed reaction is 5-methyltetrahydropteroyltri-L-glutamate + L-homocysteine = tetrahydropteroyltri-L-glutamate + L-methionine. It functions in the pathway amino-acid biosynthesis; L-methionine biosynthesis via de novo pathway; L-methionine from L-homocysteine (MetE route): step 1/1. In terms of biological role, catalyzes the transfer of a methyl group from 5-methyltetrahydrofolate to homocysteine resulting in methionine formation. The protein is 5-methyltetrahydropteroyltriglutamate--homocysteine methyltransferase of Buchnera aphidicola subsp. Schizaphis graminum (strain Sg).